The primary structure comprises 341 residues: Phenylalanine--tRNA ligase alpha subunit (341 aa).

Residue glutamate 256 participates in Mg(2+) binding.

The protein belongs to the class-II aminoacyl-tRNA synthetase family. Phe-tRNA synthetase alpha subunit type 1 subfamily. As to quaternary structure, tetramer of two alpha and two beta subunits. Mg(2+) serves as cofactor.

The protein resides in the cytoplasm. The catalysed reaction is tRNA(Phe) + L-phenylalanine + ATP = L-phenylalanyl-tRNA(Phe) + AMP + diphosphate + H(+). The sequence is that of Phenylalanine--tRNA ligase alpha subunit from Chlamydia abortus (strain DSM 27085 / S26/3) (Chlamydophila abortus).